A 339-amino-acid chain; its full sequence is Ketol-acid reductoisomerase (NADP(+)) (339 aa).

Residues 1 to 182 (MRVYYDRDAD…GGGRAGVIET (182 aa)) form the KARI N-terminal Rossmann domain. NADP(+) contacts are provided by residues 24-27 (YGSQ), arginine 48, serine 51, threonine 53, and 83-86 (DELQ). Histidine 108 is a catalytic residue. Glycine 134 contacts NADP(+). The region spanning 183-328 (TFKEECETDL…EKLRAMMPWI (146 aa)) is the KARI C-terminal knotted domain. Positions 191, 195, 227, and 231 each coordinate Mg(2+). Residue serine 252 participates in substrate binding.

It belongs to the ketol-acid reductoisomerase family. Mg(2+) serves as cofactor.

It catalyses the reaction (2R)-2,3-dihydroxy-3-methylbutanoate + NADP(+) = (2S)-2-acetolactate + NADPH + H(+). The catalysed reaction is (2R,3R)-2,3-dihydroxy-3-methylpentanoate + NADP(+) = (S)-2-ethyl-2-hydroxy-3-oxobutanoate + NADPH + H(+). The protein operates within amino-acid biosynthesis; L-isoleucine biosynthesis; L-isoleucine from 2-oxobutanoate: step 2/4. It functions in the pathway amino-acid biosynthesis; L-valine biosynthesis; L-valine from pyruvate: step 2/4. Its function is as follows. Involved in the biosynthesis of branched-chain amino acids (BCAA). Catalyzes an alkyl-migration followed by a ketol-acid reduction of (S)-2-acetolactate (S2AL) to yield (R)-2,3-dihydroxy-isovalerate. In the isomerase reaction, S2AL is rearranged via a Mg-dependent methyl migration to produce 3-hydroxy-3-methyl-2-ketobutyrate (HMKB). In the reductase reaction, this 2-ketoacid undergoes a metal-dependent reduction by NADPH to yield (R)-2,3-dihydroxy-isovalerate. This is Ketol-acid reductoisomerase (NADP(+)) from Xanthobacter autotrophicus (strain ATCC BAA-1158 / Py2).